The following is a 210-amino-acid chain: 2-dehydro-3-deoxy-phosphogluconate aldolase (210 aa).

Glutamate 41 serves as the catalytic Proton acceptor. Pyruvate contacts are provided by arginine 45, threonine 69, and lysine 129. Residue lysine 129 is the Schiff-base intermediate with substrate of the active site.

The protein belongs to the KHG/KDPG aldolase family. In terms of assembly, homotrimer.

It is found in the cytoplasm. It carries out the reaction 2-dehydro-3-deoxy-6-phospho-D-gluconate = D-glyceraldehyde 3-phosphate + pyruvate. Its pathway is carbohydrate acid metabolism; 2-dehydro-3-deoxy-D-gluconate degradation; D-glyceraldehyde 3-phosphate and pyruvate from 2-dehydro-3-deoxy-D-gluconate: step 2/2. Functionally, catalyzes the reversible, stereospecific retro-aldol cleavage of 2-keto-3-deoxy-6-phosphogluconate (KDPG) to pyruvate and D-glyceraldehyde-3-phosphate. The sequence is that of 2-dehydro-3-deoxy-phosphogluconate aldolase (eda) from Treponema pallidum (strain Nichols).